Consider the following 211-residue polypeptide: Protein-L-isoaspartate O-methyltransferase 2 (211 aa).

Ser61 is a catalytic residue.

It belongs to the methyltransferase superfamily. L-isoaspartyl/D-aspartyl protein methyltransferase family.

Its subcellular location is the cytoplasm. It catalyses the reaction [protein]-L-isoaspartate + S-adenosyl-L-methionine = [protein]-L-isoaspartate alpha-methyl ester + S-adenosyl-L-homocysteine. In terms of biological role, catalyzes the methyl esterification of L-isoaspartyl residues in peptides and proteins that result from spontaneous decomposition of normal L-aspartyl and L-asparaginyl residues. It plays a role in the repair and/or degradation of damaged proteins. This Polaromonas sp. (strain JS666 / ATCC BAA-500) protein is Protein-L-isoaspartate O-methyltransferase 2.